The sequence spans 779 residues: Mediator of RNA polymerase II transcription subunit 15 (779 aa).

Polar residues-rich tracts occupy residues 70-90 (NKNQ…NQQG) and 98-108 (ALQTLATQGTR). 4 disordered regions span residues 70 to 131 (NKNQ…GGNA), 209 to 407 (NPMQ…VPIG), 437 to 512 (FLRQ…NPQE), and 629 to 649 (PAKQ…TGSQ). A compositionally biased stretch (gly residues) spans 114–130 (GQMGPGGPMGNQMGGGN). Low complexity-rich tracts occupy residues 209–232 (NPMQ…QPQG) and 240–270 (PNQM…QMNQ). The span at 274-284 (SSGGNQMGNLG) shows a compositional bias: gly residues. 3 stretches are compositionally biased toward low complexity: residues 285–295 (GNSPMNPGNMG), 304–329 (QQMP…QMNQ), and 339–350 (GPVQQQQQPGQV). Residues 351–361 (GMAGMGPGGPG) show a composition bias toward gly residues. 3 stretches are compositionally biased toward low complexity: residues 362–383 (NLQQ…APGQ), 393–402 (NMQAMGNQGN), and 451–468 (GPGS…IPSP). Composition is skewed to polar residues over residues 477 to 500 (QVSS…NTPG) and 640 to 649 (PSTSGSTGSQ).

The protein belongs to the Mediator complex subunit 15 family. As to quaternary structure, component of the Mediator complex.

It is found in the nucleus. Functionally, component of the Mediator complex, a coactivator involved in the regulated transcription of nearly all RNA polymerase II-dependent genes. Mediator functions as a bridge to convey information from gene-specific regulatory proteins to the basal RNA polymerase II transcription machinery. Mediator is recruited to promoters by direct interactions with regulatory proteins and serves as a scaffold for the assembly of a functional preinitiation complex with RNA polymerase II and the general transcription factors. The protein is Mediator of RNA polymerase II transcription subunit 15 (MED15) of Aedes aegypti (Yellowfever mosquito).